A 393-amino-acid polypeptide reads, in one-letter code: N-acyl-phosphatidylethanolamine-hydrolyzing phospholipase D (393 aa).

Met1 is modified (N-acetylmethionine). Over residues 1-16 the composition is skewed to polar residues; sequence MDENESNQSLMTSSQY. A disordered region spans residues 1 to 40; sequence MDENESNQSLMTSSQYPKEAVRKRQNSARNSGGSDSSRFS. Zn(2+) contacts are provided by His185 and His187. Tyr188 is an an N-acyl-1,2-diacyl-sn-glycero-3-phosphoethanolamine binding site. The Zn(2+) site is built by Asp189, His190, and His253. The deoxycholate site is built by Lys256 and Met260. Zn(2+) is bound at residue Asp284. Position 321 (His321) interacts with an N-acyl-1,2-diacyl-sn-glycero-3-phosphoethanolamine. A Zn(2+)-binding site is contributed by His343. Ala348 provides a ligand contact to deoxycholate.

Belongs to the NAPE-PLD family. In terms of assembly, homodimer. Bile acids promote the assembly of inactive monomers into an active dimer and enable catalysis. The cofactor is Zn(2+). Widely expressed. Highest expression in brain, kidney and testis (at protein level). Expressed in adipose tissue (at protein level).

Its subcellular location is the golgi apparatus membrane. The protein localises to the early endosome membrane. It is found in the nucleus envelope. The protein resides in the nucleus. It localises to the nucleoplasm. It carries out the reaction an N-acyl-1,2-diacyl-sn-glycero-3-phosphoethanolamine + H2O = an N-acylethanolamine + a 1,2-diacyl-sn-glycero-3-phosphate + H(+). The catalysed reaction is N-butanoyl-1-hexadecanoyl-2-(9Z,12Z-octadecadienoyl)-sn-glycero-3-phosphoethanolamine + H2O = N-butanoyl ethanolamine + 1-hexadecanoyl-2-(9Z,12Z-octadecadienoyl)-sn-glycero-3-phosphate + H(+). It catalyses the reaction N-hexanoyl-1-hexadecanoyl-2-(9Z,12Z-octadecadienoyl)-sn-glycero-3-phosphoethanolamine + H2O = N-hexanoyl ethanolamine + 1-hexadecanoyl-2-(9Z,12Z-octadecadienoyl)-sn-glycero-3-phosphate + H(+). The enzyme catalyses N-octanoyl-1-hexadecanoyl-2-(9Z,12Z-octadecadienoyl)-sn-glycero-3-phosphoethanolamine + H2O = N-octanoyl ethanolamine + 1-hexadecanoyl-2-(9Z,12Z-octadecadienoyl)-sn-glycero-3-phosphate + H(+). It carries out the reaction N-decanoyl-1-hexadecanoyl-2-(9Z,12Z-octadecadienoyl)-sn-glycero-3-phosphoethanolamine + H2O = N-decanoyl ethanolamine + 1-hexadecanoyl-2-(9Z,12Z-octadecadienoyl)-sn-glycero-3-phosphate + H(+). The catalysed reaction is N-dodecanoyl-1,2-di-(9Z-octadecenoyl)-sn-glycero-3-phosphoethanolamine + H2O = N-dodecanoylethanolamine + 1,2-di-(9Z-octadecenoyl)-sn-glycero-3-phosphate + H(+). It catalyses the reaction N-tetradecanoyl-1,2-di-(9Z-octadecenoyl)-sn-glycero-3-phosphoethanolamine + H2O = N-tetradecanoylethanolamine + 1,2-di-(9Z-octadecenoyl)-sn-glycero-3-phosphate + H(+). The enzyme catalyses N-hexadecanoyl-1,2-di-(9Z-octadecenoyl)-sn-glycero-3-phosphoethanolamine + H2O = N-hexadecanoylethanolamine + 1,2-di-(9Z-octadecenoyl)-sn-glycero-3-phosphate + H(+). It carries out the reaction N,1-dihexadecanoyl-2-(9Z,12Z-octadecadienoyl)-sn-glycero-3-phosphoethanolamine + H2O = 1-hexadecanoyl-2-(9Z,12Z-octadecadienoyl)-sn-glycero-3-phosphate + N-hexadecanoylethanolamine + H(+). The catalysed reaction is N-octadecanoyl-1,2-di-(9Z-octadecenoyl)-sn-glycero-3-phosphoethanolamine + H2O = N-octadecanoyl ethanolamine + 1,2-di-(9Z-octadecenoyl)-sn-glycero-3-phosphate + H(+). It catalyses the reaction N,1,2-tri-(9Z-octadecenoyl)-sn-glycero-3-phosphoethanolamine + H2O = N-(9Z-octadecenoyl) ethanolamine + 1,2-di-(9Z-octadecenoyl)-sn-glycero-3-phosphate + H(+). The enzyme catalyses N-(5Z,8Z,11Z,14Z-eicosatetraenoyl)-1,2-diacyl-sn-glycero-3-phosphoethanolamine + H2O = N-(5Z,8Z,11Z,14Z-eicosatetraenoyl)-ethanolamine + a 1,2-diacyl-sn-glycero-3-phosphate + H(+). It carries out the reaction N-(5Z,8Z,11Z,14Z-eicosatetraenoyl)-1,2-di-(9Z-octadecenoyl)-sn-glycero-3-phosphoethanolamine + H2O = N-(5Z,8Z,11Z,14Z-eicosatetraenoyl)-ethanolamine + 1,2-di-(9Z-octadecenoyl)-sn-glycero-3-phosphate + H(+). The catalysed reaction is 1-O-(1Z-octadecenoyl)-2-(9Z-octadecenoyl)-sn-glycero-3-phospho-N-hexadecanoyl-ethanolamine + H2O = 1-O-(1Z-octadecenoyl)-2-(9Z-octadecenoyl)-sn-glycero-3-phosphate + N-hexadecanoylethanolamine + H(+). It catalyses the reaction N,1-diacyl-sn-glycero-3-phosphoethanolamine + H2O = an N-acylethanolamine + a 1-acyl-sn-glycero-3-phosphate + H(+). The enzyme catalyses N,1-dihexadecanoyl-sn-glycero-3-phosphoethanolamine + H2O = N-hexadecanoylethanolamine + 1-hexadecanoyl-sn-glycero-3-phosphate + H(+). It carries out the reaction N-(5Z,8Z,11Z,14Z-eicosatetraenoyl)-1-(9Z-octadecenoyl)-sn-glycero-3-phosphoethanolamine + H2O = N-(5Z,8Z,11Z,14Z-eicosatetraenoyl)-ethanolamine + 1-(9Z-octadecenoyl)-sn-glycero-3-phosphate + H(+). Its activity is regulated as follows. Activated by divalent cations. Activated by bile acids. D-type phospholipase that hydrolyzes N-acyl-phosphatidylethanolamines (NAPEs) to produce bioactive N-acylethanolamines/fatty acid ethanolamides (NAEs/FAEs) and phosphatidic acid. Cleaves the terminal phosphodiester bond of diacyl- and alkenylacyl-NAPEs, primarily playing a role in the generation of long-chain saturated and monounsaturated NAEs in the brain. May control NAPE homeostasis in dopaminergic neuron membranes and regulate neuron survival, partly through RAC1 activation. As a regulator of lipid metabolism in the adipose tissue, mediates the crosstalk between adipocytes, gut microbiota and immune cells to control body temperature and weight. In particular, regulates energy homeostasis by promoting cold-induced brown or beige adipocyte differentiation program to generate heat from fatty acids and glucose. Has limited D-type phospholipase activity toward N-acyl lyso-NAPEs. The protein is N-acyl-phosphatidylethanolamine-hydrolyzing phospholipase D (NAPEPLD) of Pongo abelii (Sumatran orangutan).